A 168-amino-acid chain; its full sequence is Small ribosomal subunit protein uS7c (168 aa).

This sequence belongs to the universal ribosomal protein uS7 family. As to quaternary structure, part of the 30S ribosomal subunit.

The protein localises to the plastid. It localises to the chloroplast. Its function is as follows. One of the primary rRNA binding proteins, it binds directly to 16S rRNA where it nucleates assembly of the head domain of the 30S subunit. The sequence is that of Small ribosomal subunit protein uS7c (rps7) from Chlamydomonas reinhardtii (Chlamydomonas smithii).